A 704-amino-acid polypeptide reads, in one-letter code: MARLVDLDKVRNIGIMAHIDAGKTTTTERILYYTGRLHRMGEVHDGGATMDWMDQEKERGITITSAATTCFWMPKFGNYIGVNHRINIIDTPGHVDFTVEVERSLRVLDGAVALFCAVGGVEPQSETVWRQANKYGVPRIAYINKMDRTGANFFETVKAIRERLGANPVPLQIPIGEGEIFAGFVDLIRMKGIIYNKEDGSTYDEVEIPHDLQNEARTWRINMLEAVSEHDDTLLEKYLNGEDITESEVRNVLRQATLKVTIIPVLCGSSFKNKGVQFMLDAVVEYLASPVDVGAVEGHHPRTEEPVTREPKDEEPFAALAFKIATDPFVGKLTFFRVYSGVLKAGSYVLNTMTGKKERIGRVLQMHSNKREDIDCVYCGDIAAAVGLKDVRTGDTLCDENSPVVLEKMVFPEPVIEIAIEPKTKSDSDRLGMSLAKLAEEDPTFKVKTDDETGQTLIAGMGELHLEILVDRLKREFKVEANVGKPQVAYRETIRKSVEFEGKFVRQSGGKGQFGLVVLRVEPLEEGKGYEFVDAVKGGVIPREYIPAVNAGVQQAMKSGVVAGFPMQDIKVTLLDGKYHEVDSSEMAFKIAGSIGFKGGAKKADPVLLEPIMKVEVVTPDEYLGDVMGDLSSRRGHIEGMGQRAGAQFVNAKVPLSAMFGYSTDLRSMSQGRANYSMEFDCYREVPRSIAEALQEKRTSKDSD.

The tr-type G domain occupies aspartate 8–valine 291. Residues alanine 17–threonine 24, aspartate 90–histidine 94, and asparagine 144–aspartate 147 contribute to the GTP site.

It belongs to the TRAFAC class translation factor GTPase superfamily. Classic translation factor GTPase family. EF-G/EF-2 subfamily.

It localises to the cytoplasm. In terms of biological role, catalyzes the GTP-dependent ribosomal translocation step during translation elongation. During this step, the ribosome changes from the pre-translocational (PRE) to the post-translocational (POST) state as the newly formed A-site-bound peptidyl-tRNA and P-site-bound deacylated tRNA move to the P and E sites, respectively. Catalyzes the coordinated movement of the two tRNA molecules, the mRNA and conformational changes in the ribosome. This chain is Elongation factor G, found in Pelodictyon phaeoclathratiforme (strain DSM 5477 / BU-1).